Here is a 223-residue protein sequence, read N- to C-terminus: Putative N-acetylmannosamine-6-phosphate 2-epimerase (223 aa).

The protein belongs to the NanE family.

It carries out the reaction an N-acyl-D-glucosamine 6-phosphate = an N-acyl-D-mannosamine 6-phosphate. Its pathway is amino-sugar metabolism; N-acetylneuraminate degradation; D-fructose 6-phosphate from N-acetylneuraminate: step 3/5. Its function is as follows. Converts N-acetylmannosamine-6-phosphate (ManNAc-6-P) to N-acetylglucosamine-6-phosphate (GlcNAc-6-P). The polypeptide is Putative N-acetylmannosamine-6-phosphate 2-epimerase (Clostridioides difficile (strain 630) (Peptoclostridium difficile)).